The following is a 471-amino-acid chain: Anthranilate 1,2-dioxygenase large subunit (471 aa).

Positions 52-160 (IYACHESEIP…IASYRGFVFV (109 aa)) constitute a Rieske domain. [2Fe-2S] cluster-binding residues include Cys-93, His-95, Cys-113, and His-116. Residues His-220, His-225, and Asp-379 each contribute to the Fe cation site.

It belongs to the bacterial ring-hydroxylating dioxygenase alpha subunit family. In terms of assembly, the anthranilate dioxygenase (AntDO) multicomponent enzyme system is composed of an oxygenase component and a NADH:acceptor reductase component (AntC). The oxygenase component is a heterohexamer of 3 large (AntA) and 3 small (AntB) subunits. Requires Fe cation as cofactor. The cofactor is [2Fe-2S] cluster.

It catalyses the reaction anthranilate + NADH + O2 + 3 H(+) = catechol + NH4(+) + CO2 + NAD(+). It carries out the reaction anthranilate + NADPH + O2 + 3 H(+) = catechol + NH4(+) + CO2 + NADP(+). It functions in the pathway aromatic compound metabolism; anthranilate degradation via hydroxylation; catechol from anthranilate: step 1/1. Its function is as follows. Component of anthranilate dioxygenase multicomponent enzyme system which catalyzes the incorporation of both atoms of molecular oxygen into anthranilate to form catechol. The protein is Anthranilate 1,2-dioxygenase large subunit of Acinetobacter baylyi (strain ATCC 33305 / BD413 / ADP1).